The sequence spans 70 residues: MLNPPLNQLTAKVNSKYLIATTAAKRARELDERRETALLDQYHSSKPVGKALEEIADGKIEPVVPKEYLG.

The protein belongs to the RNA polymerase subunit omega family. In terms of assembly, the RNAP catalytic core consists of 2 alpha, 1 beta, 1 beta' and 1 omega subunit. When a sigma factor is associated with the core the holoenzyme is formed, which can initiate transcription.

It carries out the reaction RNA(n) + a ribonucleoside 5'-triphosphate = RNA(n+1) + diphosphate. Promotes RNA polymerase assembly. Latches the N- and C-terminal regions of the beta' subunit thereby facilitating its interaction with the beta and alpha subunits. This is DNA-directed RNA polymerase subunit omega from Staphylococcus epidermidis (strain ATCC 12228 / FDA PCI 1200).